We begin with the raw amino-acid sequence, 1150 residues long: DNA polymerase (1150 aa).

A disordered region spans residues 1–53 (MSLVQGHGTSGLFTEPPNPINQQESSGPSLPAQDAAQAFASSPRAGATSTIVN).

The protein belongs to the DNA polymerase type-B family. Heterodimer with the terminal protein; this heterodimer binds to bp 9 to 18 of the genome. Forms a complex with viral pTP, DBP and hosts NFIA and POU2F1/OCT1 for initiation of replication.

The protein resides in the host nucleus. It catalyses the reaction DNA(n) + a 2'-deoxyribonucleoside 5'-triphosphate = DNA(n+1) + diphosphate. In terms of biological role, eukaryotic-type DNA polymerase involved in viral genomic replication. DNA synthesis is protein primed, and acts in a strand displacement replication. Assembles in complex with viral pTP, DBP, host NFIA and host POU2F1/OCT1 on viral origin of replication. The polymerase covalently transfers dCMP onto pTP, thereby initiating complementary strand synthesis. The chain is DNA polymerase from Canis lupus familiaris (Dog).